The following is a 506-amino-acid chain: Maturase K (506 aa).

This sequence belongs to the intron maturase 2 family. MatK subfamily.

It is found in the plastid. The protein localises to the chloroplast. In terms of biological role, usually encoded in the trnK tRNA gene intron. Probably assists in splicing its own and other chloroplast group II introns. In Medicago sativa (Alfalfa), this protein is Maturase K.